The chain runs to 1336 residues: pre-mRNA 3' end processing protein WDR33 (1336 aa).

N-acetylalanine is present on A2. At S7 the chain carries Phosphoserine. K46 carries the post-translational modification N6-acetyllysine. 7 WD repeats span residues 117–156, 159–198, 200–239, 242–283, 286–325, 329–369, and 373–412; these read KVKCPVFVVRWTPEGRRLVTGASSGEFTLWNGLTFNFETI, AHDSPVRAMTWSHNDMWMLTADHGGYVKYWQSNMNNVKMF, AHKEAIREASFSPTDNKFATCSDDGTVRIWDFLRCHEERI, GHGA…SLAT, AHKNTVMEVKLNLNGNWLLTASRDHLCKLFDIRNLKEELQ, GHKK…EVGG, and AHEGMIWSLAWHPLGHILCSGSNDHTSKFWTRNRPGDKMR. Residues K526, K530, and K560 each participate in a glycyl lysine isopeptide (Lys-Gly) (interchain with G-Cter in SUMO2) cross-link. The tract at residues 568–1336 is disordered; sequence QVEQIQPPPS…GASRGGGRGR (769 aa). Positions 573 to 590 are enriched in pro residues; sequence QPPPSSGTPLLGPQPFPG. Polar residues predominate over residues 594 to 607; sequence MSQIPQGFQQPHPS. Residues 608-643 show a composition bias toward low complexity; the sequence is QQMPMNMAQMGPPGPQGQFRPPGPQGQMGPQGPPLH. The Collagen-like domain maps to 618–770; that stretch reads GPPGPQGQFR…GPGSQGIQGP (153 aa). Positions 683–695 are enriched in pro residues; that stretch reads PHGPLGPQGPPGP. Composition is skewed to low complexity over residues 696–707 and 726–751; these read QGSSGPQGHMGP and QGHLGPQGPPGTQGMQGPPGPRGMQG. R782 is subject to Omega-N-methylarginine. Low complexity predominate over residues 854–869; it reads GPPGSQSQQGPPQGSL. R915 is modified (asymmetric dimethylarginine). Low complexity predominate over residues 932–941; sequence PGLGQQGAQG. Basic and acidic residues-rich tracts occupy residues 971–989 and 998–1034; these read SERRHEQSGGPEHGPERGP and GPPDRRGPHPDFPDDFSRPDDFHPDKRFGHRLREFEG. An Omega-N-methylarginine modification is found at R987. R1035 bears the Omega-N-methylarginine mark. Basic and acidic residues-rich tracts occupy residues 1056–1068 and 1078–1122; these read PDHREFSEGDGRG and EGRR…RGRD. The span at 1130-1140 shows a compositional bias: acidic residues; sequence FGPEENFDASE. Residues 1141-1150 are compositionally biased toward basic and acidic residues; the sequence is EAARGRDLRG. The span at 1151 to 1160 shows a compositional bias: basic residues; that stretch reads RGRGTPRGGR. 2 stretches are compositionally biased toward basic and acidic residues: residues 1169–1217 and 1242–1259; these read EFPR…RERS and SEHREMEAPGGPSEDRGG. At S1210 the chain carries Phosphoserine. R1262 bears the Omega-N-methylarginine mark. A compositionally biased stretch (basic and acidic residues) spans 1281 to 1293; it reads DGEHHDGYHRDEP. Residues 1301–1326 show a composition bias toward low complexity; it reads GTPSRGGRSGSNWGRGSNMNSGPPRR. R1315 carries the asymmetric dimethylarginine; alternate modification. Residue R1315 is modified to Omega-N-methylarginine; alternate.

This sequence belongs to the WD repeat WDR33 family. As to quaternary structure, component of the cleavage and polyadenylation specificity factor (CPSF) module of the pre-mRNA 3'-end processing complex. Interacts with CPSF3/CPSF73. As to expression, most highly expressed in testis.

It is found in the nucleus. Functionally, essential for both cleavage and polyadenylation of pre-mRNA 3' ends. The chain is pre-mRNA 3' end processing protein WDR33 (WDR33) from Homo sapiens (Human).